We begin with the raw amino-acid sequence, 282 residues long: Ribosome biogenesis GTPase A (282 aa).

A CP-type G domain is found at 14–178; sequence RREVTEKLKL…LLDTPGILWP (165 aa). Residues 58–61, 86–87, 130–135, and Gly174 contribute to the GTP site; these read NKAD, NS, and NVGKST.

Belongs to the TRAFAC class YlqF/YawG GTPase family. MTG1 subfamily. Interacts with ctc. Interacts with the immature 50S ribosome subunit. 2 molecules of RbgA bind to one 50S subunit.

The protein localises to the cytoplasm. Essential protein that is required for a late step of 50S ribosomal subunit assembly. Has GTPase activity that is stimulated by interaction with the immature 50S ribosome subunit. Binds to the 23S rRNA. Required for the association of ribosomal proteins RplP and RpmA with the large subunit. The sequence is that of Ribosome biogenesis GTPase A (rbgA) from Bacillus subtilis (strain 168).